The primary structure comprises 246 residues: Virulence plasmid protein pGP6-D (246 aa).

This sequence belongs to the UPF0137 (pGP6-D) family.

The protein is Virulence plasmid protein pGP6-D of Chlamydia muridarum (strain MoPn / Nigg).